A 387-amino-acid chain; its full sequence is 26S proteasome regulatory subunit 6B homolog (387 aa).

175-182 is a binding site for ATP; that stretch reads GPPGTGKT.

This sequence belongs to the AAA ATPase family. In terms of assembly, the 26S proteasome consists of a 20S proteasome core and two 19S regulatory subunits. The 20S proteasome core is composed of 28 subunits that are arranged in four stacked rings, resulting in a barrel-shaped structure. The two end rings are each formed by seven alpha subunits, and the two central rings are each formed by seven beta subunits. The catalytic chamber with the active sites is on the inside of the barrel.

The protein localises to the cytoplasm. It is found in the nucleus. Acts as a regulatory subunit of the 26S proteasome which degrades poly-ubiquitinated proteins in the cytoplasm and in the nucleus. It is essential for the regulated turnover of proteins and for the removal of misfolded proteins. The proteasome is a multicatalytic proteinase complex that is characterized by its ability to cleave peptides with Arg, Phe, Tyr, Leu, and Glu adjacent to the leaving group at neutral or slightly basic pH. In Encephalitozoon cuniculi (strain GB-M1) (Microsporidian parasite), this protein is 26S proteasome regulatory subunit 6B homolog.